Reading from the N-terminus, the 521-residue chain is Apolipoprotein N-acyltransferase (521 aa).

Transmembrane regions (helical) follow at residues 24-44, 71-91, 128-148, 151-171, and 182-202; these read IKETGYSILGFVAYVPLFIAL, WLGFFHAFGWITFIGVIIGYI, IGFLAYPWGLAAFTVNNFNNL, IADIFGVFFVSFAVYFLNSGI, and NLLNIAFPTLLITASFTYGMI. Residues 218–472 enclose the CN hydrolase domain; it reads LNIAAIQLNT…KGYLLSTVKL (255 aa). Glu-263 functions as the Proton acceptor in the catalytic mechanism. Lys-331 is a catalytic residue. Cys-383 functions as the Nucleophile in the catalytic mechanism.

It belongs to the CN hydrolase family. Apolipoprotein N-acyltransferase subfamily.

It is found in the cell inner membrane. It catalyses the reaction N-terminal S-1,2-diacyl-sn-glyceryl-L-cysteinyl-[lipoprotein] + a glycerophospholipid = N-acyl-S-1,2-diacyl-sn-glyceryl-L-cysteinyl-[lipoprotein] + a 2-acyl-sn-glycero-3-phospholipid + H(+). Its pathway is protein modification; lipoprotein biosynthesis (N-acyl transfer). Functionally, catalyzes the phospholipid dependent N-acylation of the N-terminal cysteine of apolipoprotein, the last step in lipoprotein maturation. This Borreliella burgdorferi (strain ATCC 35210 / DSM 4680 / CIP 102532 / B31) (Borrelia burgdorferi) protein is Apolipoprotein N-acyltransferase.